A 499-amino-acid chain; its full sequence is UTP--glucose-1-phosphate uridylyltransferase (499 aa).

N-acetylserine is present on S2. S17 bears the Phosphoserine mark. A Phosphothreonine modification is found at T19. Phosphoserine occurs at positions 21 and 79. UTP contacts are provided by residues 109 to 112 (LNGG), K123, Q186, and G215. Residue 111–112 (GG) coordinates substrate. A Mg(2+)-binding site is contributed by K123. Substrate-binding positions include H216 and 244-246 (NGD). D246 lines the UTP pocket. Position 246 (D246) interacts with Mg(2+). R369 carries the post-translational modification Omega-N-methylarginine. K388 is a binding site for UTP. K388 is a catalytic residue. The segment at 448 to 499 (HLTITGNVFLGKDVTLRGTVIIVCSDGHKIDIPNGSILENVVVTGNLQILEH) is oligomerization.

Belongs to the UDPGP type 1 family. As to quaternary structure, homooctamer.

The catalysed reaction is alpha-D-glucose 1-phosphate + UTP + H(+) = UDP-alpha-D-glucose + diphosphate. In terms of biological role, plays a central role as a glucosyl donor in cellular metabolic pathways. The polypeptide is UTP--glucose-1-phosphate uridylyltransferase (Saccharomyces cerevisiae (strain ATCC 204508 / S288c) (Baker's yeast)).